Consider the following 279-residue polypeptide: tRNA-cytidine(32) 2-sulfurtransferase (279 aa).

The short motif at 46–51 is the PP-loop motif element; sequence SGGKDS. Residues Cys121, Cys124, and Cys212 each coordinate [4Fe-4S] cluster.

This sequence belongs to the TtcA family. As to quaternary structure, homodimer. It depends on Mg(2+) as a cofactor. Requires [4Fe-4S] cluster as cofactor.

The protein localises to the cytoplasm. The enzyme catalyses cytidine(32) in tRNA + S-sulfanyl-L-cysteinyl-[cysteine desulfurase] + AH2 + ATP = 2-thiocytidine(32) in tRNA + L-cysteinyl-[cysteine desulfurase] + A + AMP + diphosphate + H(+). Its pathway is tRNA modification. Functionally, catalyzes the ATP-dependent 2-thiolation of cytidine in position 32 of tRNA, to form 2-thiocytidine (s(2)C32). The sulfur atoms are provided by the cysteine/cysteine desulfurase (IscS) system. The polypeptide is tRNA-cytidine(32) 2-sulfurtransferase (Marinomonas sp. (strain MWYL1)).